Reading from the N-terminus, the 534-residue chain is CTP synthase (534 aa).

The tract at residues 1-267 (MTKYIFVTGG…DQIVCDHLKL (267 aa)) is amidoligase domain. Serine 13 contributes to the CTP binding site. Serine 13 lines the UTP pocket. 14–19 (SIGKGI) contributes to the ATP binding site. Tyrosine 54 is an L-glutamine binding site. Aspartate 71 contacts ATP. 2 residues coordinate Mg(2+): aspartate 71 and glutamate 141. CTP-binding positions include 148–150 (DIE), 188–193 (KTKPTQ), and lysine 224. UTP contacts are provided by residues 188-193 (KTKPTQ) and lysine 224. Positions 292–534 (KIALVGKYVE…FVTAAVENAK (243 aa)) constitute a Glutamine amidotransferase type-1 domain. Glycine 354 lines the L-glutamine pocket. Cysteine 381 (nucleophile; for glutamine hydrolysis) is an active-site residue. L-glutamine-binding positions include 382 to 385 (LGMQ), glutamate 405, and arginine 463. Active-site residues include histidine 508 and glutamate 510.

Belongs to the CTP synthase family. Homotetramer.

The catalysed reaction is UTP + L-glutamine + ATP + H2O = CTP + L-glutamate + ADP + phosphate + 2 H(+). It catalyses the reaction L-glutamine + H2O = L-glutamate + NH4(+). It carries out the reaction UTP + NH4(+) + ATP = CTP + ADP + phosphate + 2 H(+). It functions in the pathway pyrimidine metabolism; CTP biosynthesis via de novo pathway; CTP from UDP: step 2/2. Allosterically activated by GTP, when glutamine is the substrate; GTP has no effect on the reaction when ammonia is the substrate. The allosteric effector GTP functions by stabilizing the protein conformation that binds the tetrahedral intermediate(s) formed during glutamine hydrolysis. Inhibited by the product CTP, via allosteric rather than competitive inhibition. Catalyzes the ATP-dependent amination of UTP to CTP with either L-glutamine or ammonia as the source of nitrogen. Regulates intracellular CTP levels through interactions with the four ribonucleotide triphosphates. This is CTP synthase from Streptococcus thermophilus (strain ATCC BAA-250 / LMG 18311).